A 231-amino-acid chain; its full sequence is Small ribosomal subunit protein uS3 (231 aa).

Residues 39-107 (IRELLHKELK…DVVLNIVEIR (69 aa)) enclose the KH type-2 domain.

It belongs to the universal ribosomal protein uS3 family. In terms of assembly, part of the 30S ribosomal subunit. Forms a tight complex with proteins S10 and S14.

In terms of biological role, binds the lower part of the 30S subunit head. Binds mRNA in the 70S ribosome, positioning it for translation. The polypeptide is Small ribosomal subunit protein uS3 (Nitrobacter winogradskyi (strain ATCC 25391 / DSM 10237 / CIP 104748 / NCIMB 11846 / Nb-255)).